The chain runs to 503 residues: Zinc finger protein JACKDAW (503 aa).

Residues 32 to 51 (IPDLNPNSNPNPNAKPNSSS) are compositionally biased toward low complexity. A disordered region spans residues 32–68 (IPDLNPNSNPNPNAKPNSSSAKKKRNQPGTPDPDADV). Position 72 is a phosphoserine (Ser-72). 2 consecutive C2H2-type zinc fingers follow at residues 82-104 (FVCEICNKGFQRDQNLQLHRRGH) and 124-154 (YICPIKTCVHHDASRALGDLTGIKKHYSRKH). Short sequence motifs (nuclear localization signal) lie at residues 100–107 (HRRGHNLP) and 146–153 (IKKHYSRK). A C2H2-type 2; degenerate zinc finger spans residues 159–182 (WKCEKCSKKYAVQSDWKAHAKTCG). Zn(2+) contacts are provided by Cys-161, Cys-164, His-177, Cys-181, Cys-188, Cys-190, His-203, and Cys-207. The CCHC-type 2; atypical zinc finger occupies 186-209 (YKCDCGTLFSRKDSFITHRAFCDA). The interval 196 to 208 (RKDSFITHRAFCD) is SHR-binding. 2 disordered regions span residues 301–417 (SSSS…SSPM) and 432–465 (RENHNRAPPPLSGVSTSSVDNNPFQSNRSGLNPA). Over residues 319-358 (TSTNPSLTLSSSSTSQQTSASLQHQTLKDSSFSPLFSSSS) the composition is skewed to low complexity. Residues 381–392 (MGSTRSNSSTAP) show a composition bias toward polar residues. The segment covering 396 to 407 (AGPTMTSSSATA) has biased composition (low complexity). The span at 444–465 (GVSTSSVDNNPFQSNRSGLNPA) shows a compositional bias: polar residues.

As to quaternary structure, interacts with SHR, SCR, MGP and itself. The heterodimer with SHR involves its zinc fingers. Interacts with SIEL. Binds to RGA and SCL3 competitively in the nucleus. Expressed in the quiescent center, the ground tissue stem cells and to a lesser extent in mature cortex and endodermis cells.

Its subcellular location is the nucleus. Functionally, transcription factor that, together with BIB, regulates tissue boundaries and asymmetric cell division by a rapid up-regulation of 'SCARECROW' (SCR), thus controlling the nuclear localization of 'SHORT-ROOT' (SHR) and restricting its action. Binds DNA via its zinc fingers. Recognizes and binds to SCL3 promoter sequence 5'-AGACAA-3' to promote its expression when in complex with RGA. Confines CYCD6 expression to the cortex-endodermis initial/daughter (CEI/CEID) tissues. Required for radial patterning and stem cell maintenance. Counteracted by 'MAGPIE' (MGP). Binds to the SCR and MGP promoter sequences. Controls position-dependent signals that regulate epidermal-cell-type patterning. The chain is Zinc finger protein JACKDAW from Arabidopsis thaliana (Mouse-ear cress).